The primary structure comprises 1158 residues: Formin-C (1158 aa).

Disordered stretches follow at residues 8–29, 417–523, and 990–1052; these read INGNEHRTSSTPQQPQQNPSVS, PNTS…LSCL, and INNN…NNSQ. The GBD/FH3 domain maps to 20–388; it reads QQPQQNPSVS…EYSQRKLEMI (369 aa). A compositionally biased stretch (polar residues) spans 417-437; that stretch reads PNTSDLFDSSTLEDTYDGNND. Residues 438–481 are compositionally biased toward low complexity; sequence TNSCTSISTSSTPIHISQPTTLIVPSTTPNHPPQQSQQTPPLQL. The stretch at 479 to 515 forms a coiled coil; that stretch reads LQLQKEKEKEKEKEKEKEKEKEKEQQQQQQQSNKQST. Positions 482-503 are enriched in basic and acidic residues; the sequence is QKEKEKEKEKEKEKEKEKEKEQ. The 398-residue stretch at 601–998 folds into the FH2 domain; it reads TKSPITPSKR…IINNNNNNNN (398 aa). The 25-residue stretch at 1134–1158 folds into the DAD domain; the sequence is SDDPMAVIIEALKTGSPNDMVKRAF.

It belongs to the formin homology family. Diaphanous subfamily. As to quaternary structure, interacts (via GBD/FH3 domain) with activated Rho-GTPases.

It is found in the cytoplasm. The protein resides in the cytosol. It localises to the cytoskeleton. In terms of biological role, formins play an important role in the nucleation of actin and the formation of linear actin filaments. The chain is Formin-C (forC) from Dictyostelium discoideum (Social amoeba).